The sequence spans 520 residues: Chaperone Ric-8B (520 aa).

A Phosphoserine modification is found at S468. T473 carries the phosphothreonine modification.

Belongs to the synembryn family. Interacts with GDP-bound G(s) G-alpha proteins GNAL and GNAS. Does not interact with G-alpha proteins when they are in complex with subunits beta and gamma.

The protein resides in the cytoplasm. The protein localises to the cell cortex. Chaperone that specifically binds and folds nascent G(s) G-alpha proteins (GNAS and GNAL) prior to G protein heterotrimer formation, promoting their association with the plasma membrane. Also acts as a guanine nucleotide exchange factor (GEF) for G(s) proteins by stimulating exchange of bound GDP for free GTP. Acts as an important component for odorant signal transduction by mediating GNAL (G(olf)-alpha) folding, thereby promoting-dependent cAMP accumulation in olfactory sensory neurons. The polypeptide is Chaperone Ric-8B (Ric8b) (Rattus norvegicus (Rat)).